Consider the following 325-residue polypeptide: MNLVSLQNSLDNATFAILLPTLLCYWTGVAFPNLKGLPAIGTAGMAIANLCMAALLGARWLEAGYFPISNLYESLFFLAWGLTAIHLLAEKLSGSRLVGAATSPLALGIVAFAAFTLPKEMRQAEPLVPALKSNWLMMHVSVMMVSYAALLVGSLLSVAFLVVTRGQAIELRGSSVGTGSFRQVKLNRASDLTIATAESGGSGGTAVLEQPVLQLAPEQLSLADTLDNVSYRVIGLGFPLLTIGIIAGAVWANEAWGSYWSWDPKETWALITWLVFAAYLHARITRGWQGRRPAILATVGFGVVWVCYLGVNLLGKGLHSYGWFF.

A run of 8 helical transmembrane segments spans residues T14–L34, G36–L56, I68–L88, L97–L117, V142–V162, V233–N253, W260–L280, and A294–L314.

Belongs to the CcmF/CycK/Ccl1/NrfE/CcsA family. In terms of assembly, may interact with ccs1.

It is found in the cellular thylakoid membrane. Functionally, required during biogenesis of c-type cytochromes (cytochrome c6 and cytochrome f) at the step of heme attachment. This chain is Cytochrome c biogenesis protein CcsA, found in Synechococcus sp. (strain ATCC 27144 / PCC 6301 / SAUG 1402/1) (Anacystis nidulans).